The following is a 146-amino-acid chain: Monothiol glutaredoxin-5, mitochondrial (146 aa).

A Glutaredoxin domain is found at 26–131; that stretch reads RQALEQAVKE…KILKEINALA (106 aa). Lys43 contacts glutathione. Cys51 serves as a coordination point for [2Fe-2S] cluster. Glutathione contacts are provided by residues 83–87, Ile95, and 108–109; these read REGIK and SD.

Belongs to the glutaredoxin family. Monothiol subfamily. In terms of assembly, homodimer. Interacts with ISA1 and ISA2.

The protein resides in the mitochondrion. Its function is as follows. Monothiol glutaredoxin involved in mitochondrial iron-sulfur (Fe/S) cluster transfer. Receives 2Fe/2S clusters from scaffold protein isu1 and mediates their transfer to apoproteins, to the 4Fe/FS cluster biosynthesis machinery, or export from mitochondrion. The sequence is that of Monothiol glutaredoxin-5, mitochondrial from Schizosaccharomyces pombe (strain 972 / ATCC 24843) (Fission yeast).